Here is a 155-residue protein sequence, read N- to C-terminus: MSELTHVRADGSAHMVDVTAKAETSRTAVAEGFVRTRADVVDKLFTADLPKGDALPVARVAGIMGAKKTPEIIPLCHPLPLGKITVDFERLPDGVRIEASVKTRGVTGVEMEALTAVTTAALTVYDMIKAVDKMAVIDGVRVLAKTGGKSGDWSV.

Residues 75 to 77 (LCH) and 111 to 112 (ME) each bind substrate. The active site involves D126.

This sequence belongs to the MoaC family. Homohexamer; trimer of dimers.

It carries out the reaction (8S)-3',8-cyclo-7,8-dihydroguanosine 5'-triphosphate = cyclic pyranopterin phosphate + diphosphate. It functions in the pathway cofactor biosynthesis; molybdopterin biosynthesis. Functionally, catalyzes the conversion of (8S)-3',8-cyclo-7,8-dihydroguanosine 5'-triphosphate to cyclic pyranopterin monophosphate (cPMP). In Corynebacterium efficiens (strain DSM 44549 / YS-314 / AJ 12310 / JCM 11189 / NBRC 100395), this protein is Cyclic pyranopterin monophosphate synthase.